A 421-amino-acid polypeptide reads, in one-letter code: Forkhead box protein J1 (421 aa).

2 disordered regions span residues 1 to 34 (MAES…DSLT) and 48 to 116 (KAPA…DYAT). Positions 66–80 (PGSAAPGSPLAADPA) are enriched in low complexity. Positions 90–99 (KPTSSCTSRS) are enriched in polar residues. The segment at residues 120–210 (VKPPYSYATL…YAERLLSGAF (91 aa)) is a DNA-binding region (fork-head). The segment at 261-302 (AGWGAGEGRLGHKRKQPLPKRVAKVPRPPSTLLPTPEEQGEL) is disordered. A compositionally biased stretch (basic residues) spans 271–284 (GHKRKQPLPKRVAK).

Belongs to the FOXJ1 family. In terms of tissue distribution, testis, oviduct, lung and brain cortex.

The protein resides in the nucleus. Functionally, transcription factor specifically required for the formation of motile cilia. Acts by activating transcription of genes that mediate assembly of motile cilia, such as CFAP157. Binds the DNA consensus sequences 5'-HWDTGTTTGTTTA-3' or 5'-KTTTGTTGTTKTW-3' (where H is not G, W is A or T, D is not C, and K is G or T). Activates the transcription of a variety of ciliary proteins in the developing brain and lung. The chain is Forkhead box protein J1 from Homo sapiens (Human).